The primary structure comprises 392 residues: Formate-dependent phosphoribosylglycinamide formyltransferase (392 aa).

Residues 22–23 (EL) and Glu-82 each bind N(1)-(5-phospho-beta-D-ribosyl)glycinamide. Residues Arg-114, Lys-155, 160-165 (SSGKGQ), 195-198 (EGVV), and Glu-203 each bind ATP. Residues 119 to 308 (RLAAEELGLP…EFALHVRAFL (190 aa)) enclose the ATP-grasp domain. Residues Glu-267 and Glu-279 each contribute to the Mg(2+) site. Residues Asp-286, Lys-355, and 362 to 363 (RR) contribute to the N(1)-(5-phospho-beta-D-ribosyl)glycinamide site.

Belongs to the PurK/PurT family. In terms of assembly, homodimer.

The catalysed reaction is N(1)-(5-phospho-beta-D-ribosyl)glycinamide + formate + ATP = N(2)-formyl-N(1)-(5-phospho-beta-D-ribosyl)glycinamide + ADP + phosphate + H(+). It functions in the pathway purine metabolism; IMP biosynthesis via de novo pathway; N(2)-formyl-N(1)-(5-phospho-D-ribosyl)glycinamide from N(1)-(5-phospho-D-ribosyl)glycinamide (formate route): step 1/1. Functionally, involved in the de novo purine biosynthesis. Catalyzes the transfer of formate to 5-phospho-ribosyl-glycinamide (GAR), producing 5-phospho-ribosyl-N-formylglycinamide (FGAR). Formate is provided by PurU via hydrolysis of 10-formyl-tetrahydrofolate. The protein is Formate-dependent phosphoribosylglycinamide formyltransferase of Cronobacter sakazakii (strain ATCC BAA-894) (Enterobacter sakazakii).